Here is a 325-residue protein sequence, read N- to C-terminus: Tetraacyldisaccharide 4'-kinase (325 aa).

Residue 53–60 (SVGGNGKT) coordinates ATP.

Belongs to the LpxK family.

It carries out the reaction a lipid A disaccharide + ATP = a lipid IVA + ADP + H(+). The protein operates within glycolipid biosynthesis; lipid IV(A) biosynthesis; lipid IV(A) from (3R)-3-hydroxytetradecanoyl-[acyl-carrier-protein] and UDP-N-acetyl-alpha-D-glucosamine: step 6/6. Its function is as follows. Transfers the gamma-phosphate of ATP to the 4'-position of a tetraacyldisaccharide 1-phosphate intermediate (termed DS-1-P) to form tetraacyldisaccharide 1,4'-bis-phosphate (lipid IVA). This Actinobacillus succinogenes (strain ATCC 55618 / DSM 22257 / CCUG 43843 / 130Z) protein is Tetraacyldisaccharide 4'-kinase.